Reading from the N-terminus, the 109-residue chain is Spermidine export protein MdtI (109 aa).

4 helical membrane passes run 6–26, 36–56, 64–84, and 88–108; these read WVHG…NVLL, CYGI…SQAV, AYAL…WVLF, and LNPK…MIKL.

It belongs to the drug/metabolite transporter (DMT) superfamily. Small multidrug resistance (SMR) (TC 2.A.7.1) family. MdtI subfamily. As to quaternary structure, forms a complex with MdtJ.

The protein localises to the cell inner membrane. Functionally, catalyzes the excretion of spermidine. This chain is Spermidine export protein MdtI, found in Salmonella arizonae (strain ATCC BAA-731 / CDC346-86 / RSK2980).